A 292-amino-acid chain; its full sequence is Protein PHR1-LIKE 3 (292 aa).

The HTH myb-type domain occupies 34–94 (TDPKPRLRWT…HLQKFRLGRQ (61 aa)). The H-T-H motif DNA-binding region spans 65–90 (PKTIMRTMGVKGLTLYHLKSHLQKFR). Residues 137–157 (TEALRAQMEVQRRLHEQLEVQ) are a coiled coil. Residues 150–155 (LHEQLE) carry the LHEQLE motif.

The protein belongs to the MYB-CC family. As to quaternary structure, homo- and heterodimers. Interacts with PHL2, but not with PHR1.

The protein resides in the nucleus. Functionally, transcriptional activator. Probable component of the central regulatory system controlling transcriptional responses to Pi starvation. Binds in a sequence-specific manner to phosphate starvation-regulated promoters. Required for female gametophyte development and function. The polypeptide is Protein PHR1-LIKE 3 (Arabidopsis thaliana (Mouse-ear cress)).